The chain runs to 325 residues: dITP/XTP pyrophosphatase (325 aa).

Residues 1-128 (MKEKIYEYKD…KKVSELGDTI (128 aa)) form a unknown region. The interval 129-324 (LIATRNEGKT…MEVFPAWQNA (196 aa)) is NTP pyrophosphatase. 132 to 137 (TRNEGK) provides a ligand contact to substrate. 2 residues coordinate Mg(2+): Glu-165 and Asp-194. Catalysis depends on Asp-194, which acts as the Proton acceptor. Substrate is bound by residues Ser-195, 278–281 (FGYD), Lys-301, and 306–307 (HR).

This sequence belongs to the HAM1 NTPase family. In terms of assembly, homodimer. It depends on Mg(2+) as a cofactor.

It catalyses the reaction XTP + H2O = XMP + diphosphate + H(+). The catalysed reaction is dITP + H2O = dIMP + diphosphate + H(+). The enzyme catalyses ITP + H2O = IMP + diphosphate + H(+). Functionally, pyrophosphatase that catalyzes the hydrolysis of nucleoside triphosphates to their monophosphate derivatives, with a high preference for the non-canonical purine nucleotides XTP (xanthosine triphosphate), dITP (deoxyinosine triphosphate) and ITP. Seems to function as a house-cleaning enzyme that removes non-canonical purine nucleotides from the nucleotide pool, thus preventing their incorporation into DNA/RNA and avoiding chromosomal lesions. This chain is dITP/XTP pyrophosphatase, found in Streptococcus mutans serotype c (strain ATCC 700610 / UA159).